We begin with the raw amino-acid sequence, 496 residues long: Lysosomal Pro-X carboxypeptidase (496 aa).

An N-terminal signal peptide occupies residues 1-21; the sequence is MGRRALLLLLLSFLAPWTTIA. Residues 22–45 constitute a propeptide that is removed on maturation; the sequence is LRPALRALGSLHLPTNPTSLPAVA. 2 N-linked (GlcNAc...) asparagine glycosylation sites follow: asparagine 47 and asparagine 101. Residue serine 179 is the Charge relay system of the active site. The SKS domain stretch occupies residues 194–334; sequence HMVVGALAAS…QNIFQALNVY (141 aa). Cystine bridges form between cysteine 215–cysteine 372, cysteine 233–cysteine 310, cysteine 264–cysteine 343, and cysteine 364–cysteine 394. Asparagine 317, asparagine 336, and asparagine 345 each carry an N-linked (GlcNAc...) asparagine glycan. A glycan (N-linked (GlcNAc...) asparagine) is linked at asparagine 415. Active-site charge relay system residues include aspartate 430 and histidine 455.

It belongs to the peptidase S28 family. In terms of assembly, homodimer.

Its subcellular location is the lysosome. The enzyme catalyses Cleavage of a -Pro-|-Xaa bond to release a C-terminal amino acid.. Functionally, cleaves C-terminal amino acids linked to proline in peptides such as angiotensin II, III and des-Arg9-bradykinin. This cleavage occurs at acidic pH, but enzymatic activity is retained with some substrates at neutral pH. In Pongo abelii (Sumatran orangutan), this protein is Lysosomal Pro-X carboxypeptidase (PRCP).